We begin with the raw amino-acid sequence, 151 residues long: Nascent polypeptide-associated complex subunit beta (151 aa).

Residues 32–97 (EQDDTKLMEA…PQEKDVTQLI (66 aa)) enclose the NAC-A/B domain. The interval 122-151 (GKTPSMGGENAGADEDIPDLIEGQKFDEVE) is disordered.

It belongs to the NAC-beta family. Part of the nascent polypeptide-associated complex (NAC), consisting of EGD2 and EGD1. NAC associates with ribosomes via EGD1.

The protein localises to the cytoplasm. Its subcellular location is the nucleus. Functionally, component of the nascent polypeptide-associated complex (NAC), a dynamic component of the ribosomal exit tunnel, protecting the emerging polypeptides from interaction with other cytoplasmic proteins to ensure appropriate nascent protein targeting. The NAC complex also promotes mitochondrial protein import by enhancing productive ribosome interactions with the outer mitochondrial membrane and blocks the inappropriate interaction of ribosomes translating non-secretory nascent polypeptides with translocation sites in the membrane of the endoplasmic reticulum. EGD1 may act as a transcription factor that exert a negative effect on the expression of several genes that are transcribed by RNA polymerase II. The chain is Nascent polypeptide-associated complex subunit beta (EGD1) from Meyerozyma guilliermondii (strain ATCC 6260 / CBS 566 / DSM 6381 / JCM 1539 / NBRC 10279 / NRRL Y-324) (Yeast).